We begin with the raw amino-acid sequence, 530 residues long: TNF receptor-associated factor family protein DDB_G0272829 (530 aa).

An RING-type; degenerate zinc finger spans residues 35-81 (CQICEGLLISSLIPNRMKALQCINGHCFCLTCWESILEIKSECPTCR). TRAF-type zinc fingers lie at residues 134–188 (RHES…KQMQ) and 189–246 (GHIL…NDND). Disordered regions lie at residues 242–267 (NNDNDNNDSDENNSNQSLSSSSLSSS), 391–432 (TTTT…DNQG), and 483–530 (FNQL…GTSL). Low complexity-rich tracts occupy residues 253-267 (NNSNQSLSSSSLSSS), 391-415 (TTTTTSTSDKNNNNNNNNNNNNNNN), and 485-502 (QLSQPQTQPQSQSQSQSL). Positions 361–422 (ILEHQQQQNQ…NNNNEDEEDD (62 aa)) form a coiled coil. Residues 509 to 530 (ITINQNQNTPSNPFSIFSGTSL) show a composition bias toward polar residues.

Belongs to the TNF receptor-associated factor family.

It is found in the cytoplasm. Probable adapter protein and signal transducer that links members of the tumor necrosis factor receptor family to different signaling pathways by association with the receptor cytoplasmic domain and kinases. The protein is TNF receptor-associated factor family protein DDB_G0272829 of Dictyostelium discoideum (Social amoeba).